Here is a 332-residue protein sequence, read N- to C-terminus: Hdr-like menaquinol oxidoreductase cytochrome b-like subunit (332 aa).

The next 5 membrane-spanning stretches (helical) occupy residues 3–23, 97–117, 143–163, 177–197, and 230–250; these read GVIF…IGVI, DARW…LVLI, VFIP…FLLW, LPSD…GNVM, and IEPI…YFPF.

As to quaternary structure, consists of five subunits: an integral membrane subunit, a cytochrome b-like subunit, a cytochrome c subunit and two iron-sulfur subunits.

The protein resides in the cell membrane. In terms of biological role, has menaquinol-oxidizing activity. HmeC and HmeD subunits may together mediate electron transfer from menaquinol to an unidentified electron acceptor on the cytoplasmic side of the membrane. The polypeptide is Hdr-like menaquinol oxidoreductase cytochrome b-like subunit (hmeC) (Archaeoglobus fulgidus (strain ATCC 49558 / DSM 4304 / JCM 9628 / NBRC 100126 / VC-16)).